The sequence spans 407 residues: Uronyl 2-sulfotransferase (407 aa).

Positions 1 to 20 are disordered; it reads MKKKQQQHPGGGTDPWPHGA. Residues 1 to 49 lie on the Cytoplasmic side of the membrane; it reads MKKKQQQHPGGGTDPWPHGAPVGGAPPCLGSCKRRIPLLPFLRFSLRDY. The helical; Signal-anchor for type II membrane protein transmembrane segment at 50 to 70 threads the bilayer; that stretch reads GFCMATLLVFCLGSLFYQLSG. At 71 to 407 the chain is on the lumenal side; that stretch reads GPPRFLLDLR…EKWLEDIYKR (337 aa). Residues Asn85, Asn141, and Asn156 are each glycosylated (N-linked (GlcNAc...) asparagine). Residue His169 is part of the active site. 2 N-linked (GlcNAc...) asparagine glycosylation sites follow: Asn174 and Asn320. The segment covering 386 to 400 has biased composition (acidic residues); that stretch reads TEEPIDDEEQDDEKW. Positions 386–407 are disordered; that stretch reads TEEPIDDEEQDDEKWLEDIYKR.

The protein belongs to the sulfotransferase 3 family.

Its subcellular location is the golgi apparatus membrane. Functionally, sulfotransferase that catalyzes the transfer of sulfate to the position 2 of uronyl residues in glycosaminoglycan chains. Has mainly activity toward iduronyl residues in dermatan sulfate, and weaker activity toward glucuronyl residues of chondroitin sulfate. Has no activity toward desulfated N-resulfated heparin. This is Uronyl 2-sulfotransferase from Mus musculus (Mouse).